A 465-amino-acid polypeptide reads, in one-letter code: Kynureninase (465 aa).

Pyridoxal 5'-phosphate-binding positions include L133, T134, F161–D164, S217, D246, H249, and Y271. K272 carries the N6-(pyridoxal phosphate)lysine modification. The pyridoxal 5'-phosphate site is built by W302 and N330.

Belongs to the kynureninase family. In terms of assembly, homodimer. Pyridoxal 5'-phosphate serves as cofactor.

The protein localises to the cytoplasm. The catalysed reaction is L-kynurenine + H2O = anthranilate + L-alanine + H(+). It carries out the reaction 3-hydroxy-L-kynurenine + H2O = 3-hydroxyanthranilate + L-alanine + H(+). It participates in amino-acid degradation; L-kynurenine degradation; L-alanine and anthranilate from L-kynurenine: step 1/1. Its pathway is cofactor biosynthesis; NAD(+) biosynthesis; quinolinate from L-kynurenine: step 2/3. Functionally, catalyzes the cleavage of L-kynurenine (L-Kyn) and L-3-hydroxykynurenine (L-3OHKyn) into anthranilic acid (AA) and 3-hydroxyanthranilic acid (3-OHAA), respectively. The chain is Kynureninase from Nematostella vectensis (Starlet sea anemone).